Here is a 209-residue protein sequence, read N- to C-terminus: Uracil phosphoribosyltransferase (209 aa).

Residues Arg79, Arg104, and 131-139 each bind 5-phospho-alpha-D-ribose 1-diphosphate; that span reads DPMLATGNS. Residues Ile194 and 199-201 each bind uracil; that span reads GDA. Asp200 lines the 5-phospho-alpha-D-ribose 1-diphosphate pocket.

It belongs to the UPRTase family. It depends on Mg(2+) as a cofactor.

It carries out the reaction UMP + diphosphate = 5-phospho-alpha-D-ribose 1-diphosphate + uracil. It participates in pyrimidine metabolism; UMP biosynthesis via salvage pathway; UMP from uracil: step 1/1. Its activity is regulated as follows. Allosterically activated by GTP. Functionally, catalyzes the conversion of uracil and 5-phospho-alpha-D-ribose 1-diphosphate (PRPP) to UMP and diphosphate. This Rhizobium etli (strain CIAT 652) protein is Uracil phosphoribosyltransferase.